Consider the following 309-residue polypeptide: Probable cell division protein kinase ECU11_1290 (309 aa).

Residues 4–288 enclose the Protein kinase domain; it reads YENIKQVGEG…VISSHKNTYI (285 aa). ATP contacts are provided by residues 10–18 and Lys33; that span reads VGEGAFGQV. Residue Asp124 is the Proton acceptor of the active site.

This sequence belongs to the protein kinase superfamily. CMGC Ser/Thr protein kinase family. CDC2/CDKX subfamily.

The protein localises to the nucleus. It catalyses the reaction L-seryl-[protein] + ATP = O-phospho-L-seryl-[protein] + ADP + H(+). The catalysed reaction is L-threonyl-[protein] + ATP = O-phospho-L-threonyl-[protein] + ADP + H(+). Functionally, may play a role in the control of the eukaryotic cell cycle. This chain is Probable cell division protein kinase ECU11_1290, found in Encephalitozoon cuniculi (strain GB-M1) (Microsporidian parasite).